Consider the following 607-residue polypeptide: Potassium transporter KimA (607 aa).

Residues 1-30 (MYHSIKRFLIGKPLKSQAAGEQKLTKLKAL) are Cytoplasmic-facing. Residues 31–49 (AMLSSDALSSVAYGTEQIL) form a helical membrane-spanning segment. The K(+) site is built by D36 and Y43. Over 50–62 (IILATISAAAFWY) the chain is Extracellular. The chain crosses the membrane as a helical span at residues 63–84 (SIPIAVGVLILLLALILSYRQI). Residues 85 to 105 (IYAYPQGGGAYIVSKENLGEK) lie on the Cytoplasmic side of the membrane. The chain crosses the membrane as a helical span at residues 106–134 (PGLIAGGSLLVDYILTVAVSISAGTDAIT). Residues D117 and S125 each coordinate K(+). Over 135 to 142 (SAFPALHD) the chain is Extracellular. A helical membrane pass occupies residues 143–162 (YHVPIAIFLVLVIMILNLRG). The Cytoplasmic segment spans residues 163–166 (LSES). Residues 167 to 190 (ASILAYPVYLFVVALLVLIAVGLF) traverse the membrane as a helical segment. Over 191–214 (KLMTGQIDQPAHHTSLGTPVAGIT) the chain is Extracellular. A helical transmembrane segment spans residues 215–238 (LFLLLKAFSSGCSALTGVEAISNA). Residues 239–249 (IPAFKNPPARN) lie on the Cytoplasmic side of the membrane. Residues 250-271 (AARTLAMMGILLAILFSGITVL) traverse the membrane as a helical segment. The Extracellular segment spans residues 272-298 (AYGYGTAPKPDETVVSQIASETFGRNV). The chain crosses the membrane as a helical span at residues 299–323 (FYYVIQGVTSLILVLAANTGFSAFP). Topologically, residues 324 to 347 (QLAFNLARDQYMPRMFTVRGDRLG) are cytoplasmic. A helical membrane pass occupies residues 348–366 (FSNGIIFLGFASIVLIILF). At 367-372 (GGQTEH) the chain is on the extracellular side. Residues 373–393 (LIPLYAVGVFIPFTLSQTGMC) form a helical membrane-spanning segment. At 394–405 (MKWIKQKPKGWI) the chain is on the cytoplasmic side. Residues 406–428 (GKMLINSCGALISFMVLSILFVT) traverse the membrane as a helical segment. The Extracellular segment spans residues 429–431 (KFN). Residues 432–447 (VVWPVLIFMPIVVLLF) traverse the membrane as a helical segment. Over 448-607 (FAIKNHYTAV…VATLPYHFKK (160 aa)) the chain is Cytoplasmic.

Belongs to the amino acid-polyamine-organocation (APC) superfamily. Homodimer.

It localises to the cell membrane. It carries out the reaction K(+)(in) + H(+)(in) = K(+)(out) + H(+)(out). Potassium uptake increases at lower external pH and is abolished by the proton ionophore carbonyl cyanide m-chlorophenylhydrazone (CCCP). Binds cyclic di-AMP (c-di-AMP), which inhibits the potassium transport activity. In terms of biological role, high-affinity potassium transporter. Functions as a K(+)/H(+) symporter. The sequence is that of Potassium transporter KimA from Bacillus subtilis (strain 168).